Here is a 238-residue protein sequence, read N- to C-terminus: Small ribosomal subunit protein uS2c (238 aa).

The protein belongs to the universal ribosomal protein uS2 family.

It localises to the plastid. Its subcellular location is the chloroplast. In Oltmannsiellopsis viridis (Marine flagellate), this protein is Small ribosomal subunit protein uS2c (rps2).